We begin with the raw amino-acid sequence, 302 residues long: Probable alpha-L-glutamate ligase (302 aa).

The 184-residue stretch at 105–288 (LQLLARKGIP…LAGKIIEYIE (184 aa)) folds into the ATP-grasp domain. ATP contacts are provided by residues K142, 179-180 (EF), D188, and 212-214 (RAN). 3 residues coordinate Mg(2+): D249, E261, and N263. The Mn(2+) site is built by D249, E261, and N263.

Belongs to the RimK family. It depends on Mg(2+) as a cofactor. Mn(2+) serves as cofactor.

The chain is Probable alpha-L-glutamate ligase from Legionella pneumophila (strain Paris).